The following is an 887-amino-acid chain: Beta-galactosidase 14 (887 aa).

The signal sequence occupies residues 1–31 (MSKSSRIRMKSRTRYLIAILLVISLCSKASS). Glu-197 serves as the catalytic Proton donor. Glu-268 functions as the Nucleophile in the catalytic mechanism. Residues Asn-269, Asn-300, Asn-395, and Asn-785 are each glycosylated (N-linked (GlcNAc...) asparagine). Residues 752-838 (KDMRLKAVMR…KTLAVQVKCE (87 aa)) form the SUEL-type lectin domain. Basic and acidic residues predominate over residues 838 to 852 (EKKEGKQDEKKKKED). The interval 838–887 (EKKEGKQDEKKKKEDKDEEEEDDEDDDEEEEEEDKENKDTKDMENKNQDM) is disordered. Residues 853 to 871 (KDEEEEDDEDDDEEEEEED) are compositionally biased toward acidic residues. A compositionally biased stretch (basic and acidic residues) spans 872–887 (KENKDTKDMENKNQDM).

It belongs to the glycosyl hydrolase 35 family.

Its subcellular location is the secreted. It localises to the extracellular space. It is found in the apoplast. The catalysed reaction is Hydrolysis of terminal non-reducing beta-D-galactose residues in beta-D-galactosides.. The protein is Beta-galactosidase 14 (BGAL14) of Arabidopsis thaliana (Mouse-ear cress).